A 636-amino-acid polypeptide reads, in one-letter code: uncharacterized protein (636 aa).

The next 3 membrane-spanning stretches (helical) occupy residues 12 to 32 (AVIYAALILILLFVYGIFGSI), 34 to 54 (IMHLGVIDAIYYTITTVTTTG), and 75 to 95 (IGAGFLLYIFTLMLSVMFMSF). An RCK N-terminal domain is found at 112 to 231 (KNHFILCGFG…KKAGANRIIS (120 aa)).

It localises to the cell membrane. This is an uncharacterized protein from Methanothermus fervidus (strain ATCC 43054 / DSM 2088 / JCM 10308 / V24 S).